A 412-amino-acid chain; its full sequence is L-cysteine:1D-myo-inositol 2-amino-2-deoxy-alpha-D-glucopyranoside ligase (412 aa).

Zn(2+) is bound at residue C43. Residues 43–46, T58, and 81–83 contribute to the L-cysteinyl-5'-AMP site; these read CGIT and NVT. The 'HIGH' region signature appears at 45 to 55; it reads ITPYDATHLGH. A 'ERGGDP' region motif is present at residues 187-192; it reads ERGGDP. W227 contacts L-cysteinyl-5'-AMP. C231 serves as a coordination point for Zn(2+). 249–251 contributes to the L-cysteinyl-5'-AMP binding site; the sequence is GSD. H256 serves as a coordination point for Zn(2+). I283 provides a ligand contact to L-cysteinyl-5'-AMP. The 'KMSKS' region signature appears at 289-293; sequence KMSKS.

This sequence belongs to the class-I aminoacyl-tRNA synthetase family. MshC subfamily. Monomer. Zn(2+) is required as a cofactor.

It carries out the reaction 1D-myo-inositol 2-amino-2-deoxy-alpha-D-glucopyranoside + L-cysteine + ATP = 1D-myo-inositol 2-(L-cysteinylamino)-2-deoxy-alpha-D-glucopyranoside + AMP + diphosphate + H(+). Functionally, catalyzes the ATP-dependent condensation of GlcN-Ins and L-cysteine to form L-Cys-GlcN-Ins. This chain is L-cysteine:1D-myo-inositol 2-amino-2-deoxy-alpha-D-glucopyranoside ligase (mshC), found in Mycolicibacterium smegmatis (strain ATCC 700084 / mc(2)155) (Mycobacterium smegmatis).